The chain runs to 319 residues: 1-aminocyclopropane-1-carboxylate oxidase (319 aa).

A Fe2OG dioxygenase domain is found at 152-253; the sequence is GPNFGSKVSN…RMSLASFYNP (102 aa). Positions 177, 179, and 234 each coordinate Fe cation.

Belongs to the iron/ascorbate-dependent oxidoreductase family. The cofactor is Fe cation.

It carries out the reaction 1-aminocyclopropane-1-carboxylate + L-ascorbate + O2 = ethene + L-dehydroascorbate + hydrogen cyanide + CO2 + 2 H2O. Its pathway is alkene biosynthesis; ethylene biosynthesis via S-adenosyl-L-methionine; ethylene from S-adenosyl-L-methionine: step 2/2. This chain is 1-aminocyclopropane-1-carboxylate oxidase (ACO), found in Nicotiana tabacum (Common tobacco).